We begin with the raw amino-acid sequence, 992 residues long: Probable RNA-dependent RNA polymerase 3 (992 aa).

Residues 88–113 (PRLSPGESPVQSPRTPAKKSCRASQD) form a disordered region.

It belongs to the RdRP family.

The catalysed reaction is RNA(n) + a ribonucleoside 5'-triphosphate = RNA(n+1) + diphosphate. Probably involved in the RNA silencing pathway and required for the generation of small interfering RNAs (siRNAs). The chain is Probable RNA-dependent RNA polymerase 3 (RDR3) from Arabidopsis thaliana (Mouse-ear cress).